The following is a 309-amino-acid chain: MSEINISAAAVKELREKTGAGMMDCKKALIETSGNFEEAIDFLRKKGLAAAVKKFGRIASEGLTAIKINGLTSVVIEVNSETDFVARNEQFQNLVKDIVNLAIIAQNIDALKISKMQSGKSVEEEIIENIATIGENLTLRRMDILEISNGAIGSYVHNEVVPHLGKISVLVGLESNAKDKAKLAALAKQIAVHVAGNNPQSIDTLSLDQALVERERKVFFEKSKEEGKPDHIIEKMVEGRIRKFFSEVVLLQQNFLFEPKLTVAEVIKNAEQELGAEIKITKFIRYALGEGIEHEEKNFADEVASITKC.

The interval 82–85 (TDFV) is involved in Mg(2+) ion dislocation from EF-Tu.

It belongs to the EF-Ts family.

The protein resides in the cytoplasm. Associates with the EF-Tu.GDP complex and induces the exchange of GDP to GTP. It remains bound to the aminoacyl-tRNA.EF-Tu.GTP complex up to the GTP hydrolysis stage on the ribosome. In Rickettsia typhi (strain ATCC VR-144 / Wilmington), this protein is Elongation factor Ts.